The primary structure comprises 251 residues: Capsid protein (251 aa).

Residues 3–20 (KRDAPWRSMAGTSKVSRN) carry the Bipartite nuclear localization signal motif. A Nuclear localization signal motif is present at residues 35 to 49 (KAAAWVNRPMYRKPR). A zinc finger spans residues 63–80 (CEGPCKVQSYEQRHDISH). The Nuclear export signal signature appears at 96-117 (ITHRVGKRFCVKSVYILGKIWM). Positions 195 to 242 (KRFWKVNNYVVYNHQEAGKYENHTENALLLYMACTHASNPVYATLKIR) match the Bipartite nuclear localization signal motif.

The protein belongs to the geminiviridae capsid protein family. In terms of assembly, homomultimer. Binds to single-stranded and double-stranded viral DNA. Interacts (via nuclear localization signals) with host importin alpha-1a.

It is found in the virion. The protein resides in the host nucleus. In terms of biological role, encapsidates the viral DNA into characteristic twinned ('geminate') particles. Binds the genomic viral ssDNA and shuttles it into and out of the cell nucleus. The CP of bipartite geminiviruses is not required for cell-to-cell or systemic movement. This is Capsid protein from Cabbage leaf curl virus (isolate Jamaica) (CaLCuV).